A 108-amino-acid chain; its full sequence is PTS system fructose-like EIIB component 1 (108 aa).

The 104-residue stretch at 1–104 (MSKKLIALCA…IIKEIEEMIA (104 aa)) folds into the PTS EIIB type-2 domain. C11 functions as the Phosphocysteine intermediate in the catalytic mechanism. At C11 the chain carries Phosphocysteine; by EIIA.

The protein resides in the cytoplasm. It catalyses the reaction D-fructose(out) + N(pros)-phospho-L-histidyl-[protein] = D-fructose 1-phosphate(in) + L-histidyl-[protein]. In terms of biological role, the phosphoenolpyruvate-dependent sugar phosphotransferase system (sugar PTS), a major carbohydrate active transport system, catalyzes the phosphorylation of incoming sugar substrates concomitantly with their translocation across the cell membrane. The enzyme II FryABC PTS system is involved in fructose transport. The chain is PTS system fructose-like EIIB component 1 (fryB) from Escherichia coli O157:H7.